Reading from the N-terminus, the 431-residue chain is Chorismate synthase 2, chloroplastic (431 aa).

The transit peptide at 1 to 48 (MASSMLTKQFLGAPFSSFGSGQQPSKLCSSNLRFPTHRSQPKRLEIQA) directs the protein to the chloroplast. Residues 93-141 (DRRRPGQSRITTPRKETDTCKISSGTADGLTTGSPIKVEVPNTDQRGND) form a disordered region. The segment covering 112 to 126 (CKISSGTADGLTTGS) has biased composition (polar residues).

Belongs to the chorismate synthase family. In terms of assembly, homotetramer. FMNH2 serves as cofactor. In terms of tissue distribution, predominantly expressed in flowers and roots and, to a lesser extent, in stems, leaves, and cotyledons.

It localises to the plastid. The protein localises to the chloroplast. The enzyme catalyses 5-O-(1-carboxyvinyl)-3-phosphoshikimate = chorismate + phosphate. The protein operates within metabolic intermediate biosynthesis; chorismate biosynthesis; chorismate from D-erythrose 4-phosphate and phosphoenolpyruvate: step 7/7. Catalyzes the last common step of the biosynthesis of aromatic amino acids, produced via the shikimic acid pathway. This chain is Chorismate synthase 2, chloroplastic (CS2), found in Solanum lycopersicum (Tomato).